The sequence spans 124 residues: Small ribosomal subunit protein uS12 (124 aa).

Asp89 carries the 3-methylthioaspartic acid modification. Residues 105–124 are disordered; that stretch reads AGVKDRRQSRSKYGAKRPKA. The span at 113–124 shows a compositional bias: basic residues; that stretch reads SRSKYGAKRPKA.

Belongs to the universal ribosomal protein uS12 family. As to quaternary structure, part of the 30S ribosomal subunit. Contacts proteins S8 and S17. May interact with IF1 in the 30S initiation complex.

Its function is as follows. With S4 and S5 plays an important role in translational accuracy. In terms of biological role, interacts with and stabilizes bases of the 16S rRNA that are involved in tRNA selection in the A site and with the mRNA backbone. Located at the interface of the 30S and 50S subunits, it traverses the body of the 30S subunit contacting proteins on the other side and probably holding the rRNA structure together. The combined cluster of proteins S8, S12 and S17 appears to hold together the shoulder and platform of the 30S subunit. The chain is Small ribosomal subunit protein uS12 (rpsL) from Synechococcus elongatus (strain ATCC 33912 / PCC 7942 / FACHB-805) (Anacystis nidulans R2).